Here is a 358-residue protein sequence, read N- to C-terminus: MRMTFRWYGENNDSVTLEQIKQIPGVEGLVWALHDKVAGEVWPLEDIMQVKEQADRYGFHLDVVESINVHEDIKLGLPTRDAYIENYKESIRNVAKVGAKVICYNFMPVFDWTRTDLFKEMEDGSTALFYEKAKVDNMDPRELVRQTTSNAAFTMPGWEPERLAHIEKSLKAYENVTEDDLWEHLQYFLEQVLPVAEEHGIQMAIHPDDPPWSVFGLPRIITSEAAVERFLQLSNSPAHGITLCSGSLGANPENDIPKIIRRFHDRIPFAHIRNVKIYENGDFIETSHRSQDGSVNIADVVKAYHENGFTGYVRPDHGRHIWNEKCRPGYGLYDRALGIMHLWGLWDAYELEAKRRQS.

This sequence belongs to the mannonate dehydratase family. Requires Fe(2+) as cofactor. Mn(2+) serves as cofactor.

It catalyses the reaction D-mannonate = 2-dehydro-3-deoxy-D-gluconate + H2O. It participates in carbohydrate metabolism; pentose and glucuronate interconversion. Catalyzes the dehydration of D-mannonate. The sequence is that of Mannonate dehydratase from Shouchella clausii (strain KSM-K16) (Alkalihalobacillus clausii).